Reading from the N-terminus, the 84-residue chain is Large ribosomal subunit protein bL27 (84 aa).

Positions Met1–Gly22 are disordered.

This sequence belongs to the bacterial ribosomal protein bL27 family.

The protein is Large ribosomal subunit protein bL27 of Shewanella amazonensis (strain ATCC BAA-1098 / SB2B).